The chain runs to 123 residues: Large ribosomal subunit protein eL8 (123 aa).

It belongs to the eukaryotic ribosomal protein eL8 family. As to quaternary structure, part of the 50S ribosomal subunit. Probably part of the RNase P complex.

It localises to the cytoplasm. Functionally, multifunctional RNA-binding protein that recognizes the K-turn motif in ribosomal RNA, the RNA component of RNase P, box H/ACA, box C/D and box C'/D' sRNAs. In Methanopyrus kandleri (strain AV19 / DSM 6324 / JCM 9639 / NBRC 100938), this protein is Large ribosomal subunit protein eL8.